The primary structure comprises 128 residues: Small ribosomal subunit protein uS11 (128 aa).

This sequence belongs to the universal ribosomal protein uS11 family. Part of the 30S ribosomal subunit. Interacts with proteins S7 and S18. Binds to IF-3.

Functionally, located on the platform of the 30S subunit, it bridges several disparate RNA helices of the 16S rRNA. Forms part of the Shine-Dalgarno cleft in the 70S ribosome. This Ligilactobacillus salivarius (strain UCC118) (Lactobacillus salivarius) protein is Small ribosomal subunit protein uS11.